Here is a 371-residue protein sequence, read N- to C-terminus: MSQTLVLKIGTSSLTNPDTGHLALATIASLVEVLSQLRQEGNQVILVSSGAVGIGCARLGLAERPKAIALKQAVAAVGQGRLMRIYDDFFTSLQQPIAQVLLTRGDLADRSRYINASNTLQELLKLGVIPIVNENDTVAVDELLRFGDNDTLSALVAGLVQADWLFILTDVDRLYSADPRIQPDAQPIVTVERMEELAALNVNAGAQGSQWGTGGMATKISAAAIATNAGVRTVITQGKTPENIPRILAGESLGTQFQPHPRPHNARKHWIAHALVPTGKLILDDGAAKAITTLGKSLLAAGITAVEGEFQSQEAVCFYDSAGVEIARGLVNYSSDELQRIQGRQSEDIPQVLGYAGAETVVHRDNLVITG.

Lys-8 provides a ligand contact to ATP. Residues Ser-49, Asp-136, and Asn-149 each contribute to the substrate site. ATP-binding positions include 169–170 (TD) and 213–219 (TGGMATK). Positions 278 to 356 (TGKLILDDGA…EDIPQVLGYA (79 aa)) constitute a PUA domain.

Belongs to the glutamate 5-kinase family.

It localises to the cytoplasm. The catalysed reaction is L-glutamate + ATP = L-glutamyl 5-phosphate + ADP. It functions in the pathway amino-acid biosynthesis; L-proline biosynthesis; L-glutamate 5-semialdehyde from L-glutamate: step 1/2. Catalyzes the transfer of a phosphate group to glutamate to form L-glutamate 5-phosphate. The chain is Glutamate 5-kinase from Acaryochloris marina (strain MBIC 11017).